Here is a 124-residue protein sequence, read N- to C-terminus: Small ribosomal subunit protein uS12 (124 aa).

3-methylthioaspartic acid is present on Asp89.

This sequence belongs to the universal ribosomal protein uS12 family. In terms of assembly, part of the 30S ribosomal subunit. Contacts proteins S8 and S17. May interact with IF1 in the 30S initiation complex.

In terms of biological role, with S4 and S5 plays an important role in translational accuracy. Interacts with and stabilizes bases of the 16S rRNA that are involved in tRNA selection in the A site and with the mRNA backbone. Located at the interface of the 30S and 50S subunits, it traverses the body of the 30S subunit contacting proteins on the other side and probably holding the rRNA structure together. The combined cluster of proteins S8, S12 and S17 appears to hold together the shoulder and platform of the 30S subunit. The chain is Small ribosomal subunit protein uS12 from Buchnera aphidicola subsp. Acyrthosiphon pisum (strain 5A).